Reading from the N-terminus, the 193-residue chain is dCTP deaminase (193 aa).

Residues 110–115, Asp128, 136–138, Tyr171, Lys178, and Gln182 each bind dCTP; these read RSSLAR and VLE. Catalysis depends on Glu138, which acts as the Proton donor/acceptor. The tract at residues 169-193 is disordered; that stretch reads RPYNSRQDAKYRGQQGAVASRIDKD.

The protein belongs to the dCTP deaminase family. As to quaternary structure, homotrimer.

The catalysed reaction is dCTP + H2O + H(+) = dUTP + NH4(+). Its pathway is pyrimidine metabolism; dUMP biosynthesis; dUMP from dCTP (dUTP route): step 1/2. In terms of biological role, catalyzes the deamination of dCTP to dUTP. The sequence is that of dCTP deaminase from Yersinia pestis bv. Antiqua (strain Antiqua).